The primary structure comprises 241 residues: MIALGVNIDHVATLRQARGTDYPSPIKAALVAEESGADAITLHLREDRRHIQEEDVIILRERLKTRMNLESAVTEEMISFACRIKPHDICLVPERREELTTEGGLDVIRHFDQVSAACKRLTEAGIRVSLFVDARADQIDAAIRVGAPVIELHTGHYADAATSEAQQAELETIRSMAAYAFSRGLQVNAGHSLHYQNTTPIAFIPEITELNIGHAIVARALFIGFAQAVREMKTLMQEARA.

Asn7 serves as a coordination point for 3-amino-2-oxopropyl phosphate. 9–10 (DH) lines the 1-deoxy-D-xylulose 5-phosphate pocket. Residue Arg18 coordinates 3-amino-2-oxopropyl phosphate. His43 serves as the catalytic Proton acceptor. 1-deoxy-D-xylulose 5-phosphate contacts are provided by Arg45 and His50. The active-site Proton acceptor is the Glu70. Thr100 is a binding site for 1-deoxy-D-xylulose 5-phosphate. The Proton donor role is filled by His191. Residues Ser192 and 213–214 (GH) each bind 3-amino-2-oxopropyl phosphate.

It belongs to the PNP synthase family. Homooctamer; tetramer of dimers.

Its subcellular location is the cytoplasm. It catalyses the reaction 3-amino-2-oxopropyl phosphate + 1-deoxy-D-xylulose 5-phosphate = pyridoxine 5'-phosphate + phosphate + 2 H2O + H(+). It participates in cofactor biosynthesis; pyridoxine 5'-phosphate biosynthesis; pyridoxine 5'-phosphate from D-erythrose 4-phosphate: step 5/5. Catalyzes the complicated ring closure reaction between the two acyclic compounds 1-deoxy-D-xylulose-5-phosphate (DXP) and 3-amino-2-oxopropyl phosphate (1-amino-acetone-3-phosphate or AAP) to form pyridoxine 5'-phosphate (PNP) and inorganic phosphate. The chain is Pyridoxine 5'-phosphate synthase from Nitrosomonas eutropha (strain DSM 101675 / C91 / Nm57).